The chain runs to 263 residues: tRNA pseudouridine synthase A (263 aa).

Asp51 acts as the Nucleophile in catalysis. A substrate-binding site is contributed by Tyr109.

Belongs to the tRNA pseudouridine synthase TruA family. As to quaternary structure, homodimer.

It catalyses the reaction uridine(38/39/40) in tRNA = pseudouridine(38/39/40) in tRNA. Its function is as follows. Formation of pseudouridine at positions 38, 39 and 40 in the anticodon stem and loop of transfer RNAs. The polypeptide is tRNA pseudouridine synthase A (Pseudoalteromonas atlantica (strain T6c / ATCC BAA-1087)).